We begin with the raw amino-acid sequence, 553 residues long: HTH-type transcriptional regulator SgrR (553 aa).

One can recognise an HTH marR-type domain in the interval 1–117 (MSTARLQQQF…LSQLGRSFRQ (117 aa)). The segment at residues 26-49 (LQELAEVLCCSRRHVRSLLGSMQQ) is a DNA-binding region (H-T-H motif). Positions 163–494 (ELEPDLSHHW…EELHQDVELW (332 aa)) are solute-binding.

Activates the small RNA gene sgrS under glucose-phosphate stress conditions as well as yfdZ. Represses its own transcription under both stress and non-stress conditions. Might act as a sensor of the intracellular accumulation of phosphoglucose by binding these molecules in its C-terminal solute-binding domain. The protein is HTH-type transcriptional regulator SgrR of Yersinia enterocolitica serotype O:8 / biotype 1B (strain NCTC 13174 / 8081).